Consider the following 400-residue polypeptide: Glycine betaine/proline betaine transport system ATP-binding protein ProV (400 aa).

Positions 29 to 265 (LSKEQILEKT…PANDYVRTFF (237 aa)) constitute an ABC transporter domain. Residue 61-68 (GLSGSGKS) participates in ATP binding. CBS domains lie at 282–341 (RTPN…GLDA) and 343–400 (LIDA…VNNG).

This sequence belongs to the ABC transporter superfamily. The complex is composed of two ATP-binding proteins (ProV), two transmembrane proteins (ProW) and a solute-binding protein (ProX).

It is found in the cell inner membrane. Part of the ProU ABC transporter complex involved in glycine betaine and proline betaine uptake. Probably responsible for energy coupling to the transport system. This is Glycine betaine/proline betaine transport system ATP-binding protein ProV from Escherichia coli (strain K12).